A 712-amino-acid polypeptide reads, in one-letter code: Probable serine/threonine-protein kinase fhkE (712 aa).

One can recognise an FHA domain in the interval 46–100 (ITFGRLKDSTVHYNDKSISGSHCKITRESNDDDGVVIAFIYDNSTNGTFIDNIKV). The Protein kinase domain maps to 145 to 411 (YFIGEMLGQG…CNNIIQHPWF (267 aa)). Residues 151-159 (LGQGNFATV) and lysine 174 each bind ATP. Catalysis depends on aspartate 270, which acts as the Proton acceptor. Residues 414-442 (NVKLSTLLEEDERLRKKAEAEVEANNNNT) adopt a coiled-coil conformation. Positions 431-695 (AEAEVEANNN…KCQYDPNCYR (265 aa)) are disordered. Composition is skewed to low complexity over residues 436 to 446 (EANNNNTNKSN), 459 to 481 (GNCS…IKSN), 514 to 571 (NNDN…SNDT), 595 to 605 (NLQNHLNNNKI), and 616 to 639 (NNNN…NNNN). Polar residues predominate over residues 669 to 678 (PQNSSNNNSG).

It belongs to the protein kinase superfamily. CAMK Ser/Thr protein kinase family. CHK2 subfamily.

It catalyses the reaction L-seryl-[protein] + ATP = O-phospho-L-seryl-[protein] + ADP + H(+). The enzyme catalyses L-threonyl-[protein] + ATP = O-phospho-L-threonyl-[protein] + ADP + H(+). The chain is Probable serine/threonine-protein kinase fhkE (fhkE) from Dictyostelium discoideum (Social amoeba).